Reading from the N-terminus, the 410-residue chain is FAS1 domain-containing protein CaO19.3004 (410 aa).

The N-terminal stretch at 1-18 (MKLSKLLQLAVFSSLVTS) is a signal peptide. Basic and acidic residues-rich tracts occupy residues 64–73 (NAKFKRDPKN) and 83–96 (GSAEEEQKDKREPK). Positions 64–98 (NAKFKRDPKNVIDPASLKEGSAEEEQKDKREPKNL) are disordered. The FAS1 domain occupies 247–407 (NNLLQSILPQ…GFVLIINDSL (161 aa)).

It is found in the vacuole. In Candida albicans (strain SC5314 / ATCC MYA-2876) (Yeast), this protein is FAS1 domain-containing protein CaO19.3004.